The primary structure comprises 159 residues: Protein-export protein SecB (159 aa).

This sequence belongs to the SecB family. As to quaternary structure, homotetramer, a dimer of dimers. One homotetramer interacts with 1 SecA dimer.

It localises to the cytoplasm. One of the proteins required for the normal export of preproteins out of the cell cytoplasm. It is a molecular chaperone that binds to a subset of precursor proteins, maintaining them in a translocation-competent state. It also specifically binds to its receptor SecA. This chain is Protein-export protein SecB, found in Burkholderia mallei (strain NCTC 10229).